The sequence spans 291 residues: Orotidine 5'-phosphate decarboxylase (291 aa).

Lysine 97 acts as the Proton donor in catalysis.

The protein belongs to the OMP decarboxylase family. Type 2 subfamily.

It catalyses the reaction orotidine 5'-phosphate + H(+) = UMP + CO2. Its pathway is pyrimidine metabolism; UMP biosynthesis via de novo pathway; UMP from orotate: step 2/2. In Clostridium kluyveri (strain ATCC 8527 / DSM 555 / NBRC 12016 / NCIMB 10680 / K1), this protein is Orotidine 5'-phosphate decarboxylase.